The chain runs to 303 residues: MVSLSCLISYGECLLETVQTHPWSTIGVVVFLSSVKNAPLMWHARLIIAVFYHSVTRKNDVVTIERYGRQGLFGYIVTSSRSPLYECDINGHKSDSTYFSDLDINRIHLITRLFKGAGDLSLRPDRPNVAPEDRPKKMRVLLGGTCCSFRREIKPYAAYEIHSRVLAWDEKWLYVVSYFVKPGSARKMASLQTEVGDKCEMTDLARSMVFTSAITKFVFKDGRKTVRPADALEEMGLLSASEEVVEISEAGEDLWTRSRVEERRKTGIKIAQHFIALDELHDQFEHVSEHPFLGKFGVLGTMF.

This sequence belongs to the lcsJ thioesterase family.

Its pathway is secondary metabolite biosynthesis. Thioesterase; part of the gene cluster that mediates the biosynthesis of oxaleimides, cytotoxic compounds containing an unusual disubstituted succinimide moiety. The first step of the pathway is provided by the HR-PKS poxF that serves in a new mode of collaborative biosynthesis with the PKS-NRPS poxE, by providing the olefin containing amino acid substrate via the synthesis of an ACP-bound dec-4-enoate. The cytochrome P450 monooxygenase poxM-catalyzed oxidation at the alpha-position creates the enzyme-bound 2-hydroxydec-4-enoyl-ACP thioester, which may be prone to spontaneous hydrolysis to yield 2-hydroxydec-4-enoic acid due to increased electrophilicity of the carbonyl. 2-hydroxydec-4-enoic acid can then be further oxidized by poxM to yield the alpha-ketoacid 2-oxodec-4-enoicacid, which is reductively aminated by the aminotransferase poxL to yield (S,E)-2-aminodec-4-enoic acid. The Hybrid PKS-NRPS synthetase poxE then performs condensation between the octaketide product of its PKS modules and the amino group of (S,E)-2-aminodec-4-enoic acid which is activated and incorporated by the adenylation domain. The resulting aminoacyl product can be cyclized by the Diels-Alderase PoxQ and reductively released by the reductive (R) domain of poxE to yield an aldehyde intermediate. The released aldehyde is then substrate for a Knoevenagel condensation by the hydrolyase poxO followed by an oxidation at the 5-position of the pyrrolidone ring. The presence of the olefin from the amino acid building block allows for migration of the substituted allyl group to occur. This allylic transposition reaction takes place in a conjugate addition, semipinacol-like fashion to yield a succinimide intermediate. Iterative two-electron oxidations of the C7 methyl of the succinimide intermediate to the carboxylic acid can be catalyzed by one of two remaining cytochrome P450 monooxygenasess poxC or poxD to yield oxaleimide A. Subsequent oxidation yields the maleimide scaffold oxaleimide I. Both oxaleimide A and oxaleimide I can undergo oxidative modifications in the decalin ring to yield the series of products oxaleimides B to H. This chain is Thioesterase poxG, found in Penicillium oxalicum.